A 281-amino-acid polypeptide reads, in one-letter code: Pantothenate synthetase (281 aa).

Position 31–38 (31–38 (MGNLHAGH)) interacts with ATP. The active-site Proton donor is the His38. A (R)-pantoate-binding site is contributed by Gln62. Gln62 contacts beta-alanine. 150–153 (GKKD) lines the ATP pocket. Residue Gln156 coordinates (R)-pantoate. Residues Val179 and 187–190 (MSSR) contribute to the ATP site.

Belongs to the pantothenate synthetase family. Homodimer.

It is found in the cytoplasm. It carries out the reaction (R)-pantoate + beta-alanine + ATP = (R)-pantothenate + AMP + diphosphate + H(+). Its pathway is cofactor biosynthesis; (R)-pantothenate biosynthesis; (R)-pantothenate from (R)-pantoate and beta-alanine: step 1/1. Its function is as follows. Catalyzes the condensation of pantoate with beta-alanine in an ATP-dependent reaction via a pantoyl-adenylate intermediate. This Xylella fastidiosa (strain 9a5c) protein is Pantothenate synthetase.